We begin with the raw amino-acid sequence, 374 residues long: N5-carboxyaminoimidazole ribonucleotide synthase (374 aa).

Residues arginine 108, lysine 148, 153 to 159 (GYDGKGQ), 183 to 186 (EKYL), glutamate 191, histidine 214, and 266 to 267 (NE) each bind ATP. Residues 112–296 (KETLKSAGTK…QFDTHILAVT (185 aa)) form the ATP-grasp domain.

It belongs to the PurK/PurT family. In terms of assembly, homodimer.

The enzyme catalyses 5-amino-1-(5-phospho-beta-D-ribosyl)imidazole + hydrogencarbonate + ATP = 5-carboxyamino-1-(5-phospho-D-ribosyl)imidazole + ADP + phosphate + 2 H(+). It functions in the pathway purine metabolism; IMP biosynthesis via de novo pathway; 5-amino-1-(5-phospho-D-ribosyl)imidazole-4-carboxylate from 5-amino-1-(5-phospho-D-ribosyl)imidazole (N5-CAIR route): step 1/2. Catalyzes the ATP-dependent conversion of 5-aminoimidazole ribonucleotide (AIR) and HCO(3)(-) to N5-carboxyaminoimidazole ribonucleotide (N5-CAIR). This is N5-carboxyaminoimidazole ribonucleotide synthase from Staphylococcus aureus (strain MSSA476).